A 919-amino-acid chain; its full sequence is Probable dipeptidyl-aminopeptidase B (919 aa).

The segment covering 1-10 (MRRSDGHEET) has biased composition (basic and acidic residues). The interval 1–53 (MRRSDGHEETSEFLPMTHSRSVSAASQTSTDSSLSTESLFPREQKPFPNAMGG) is disordered. Residues 1–92 (MRRSDGHEET…AATGGGRARR (92 aa)) lie on the Cytoplasmic side of the membrane. Residues 21–38 (SVSAASQTSTDSSLSTES) are compositionally biased toward low complexity. The chain crosses the membrane as a helical; Signal-anchor for type II membrane protein span at residues 93–113 (IFWILVLLCLGGWLLAFVLFL). The Vacuolar segment spans residues 114–919 (TGGRANYQTA…MKRSLRLLSP (806 aa)). Asn-200, Asn-352, and Asn-643 each carry an N-linked (GlcNAc...) asparagine glycan. Ser-757 serves as the catalytic Charge relay system. Residue Asn-811 is glycosylated (N-linked (GlcNAc...) asparagine). Active-site charge relay system residues include Asp-834 and His-867.

The protein belongs to the peptidase S9B family.

The protein localises to the vacuole membrane. It catalyses the reaction Release of an N-terminal dipeptide, Xaa-Yaa-|-Zaa-, from a polypeptide, preferentially when Yaa is Pro, provided Zaa is neither Pro nor hydroxyproline.. Functionally, type IV dipeptidyl-peptidase which removes N-terminal dipeptides sequentially from polypeptides having unsubstituted N-termini provided that the penultimate residue is proline. This Aspergillus fumigatus (strain CBS 144.89 / FGSC A1163 / CEA10) (Neosartorya fumigata) protein is Probable dipeptidyl-aminopeptidase B (dapB).